The following is a 392-amino-acid chain: Nucleolysin TIAR (392 aa).

2 consecutive RRM domains span residues 9 to 102 (RTLY…WATT) and 114 to 192 (FHVF…WATR). K139 bears the N6-acetyllysine mark. S218 carries the post-translational modification Phosphoserine. In terms of domain architecture, RRM 3 spans 222 to 294 (CTVYCGGIAS…HVVKCYWGKE (73 aa)). The disordered stretch occupies residues 363–392 (GAQPPQGQAPPPVIPPPNQAGYGMASFPTQ). Residues 369–380 (GQAPPPVIPPPN) are compositionally biased toward pro residues.

In terms of assembly, interacts with FASTK. In terms of processing, phosphorylated by MAPK14 following DNA damage, releasing TIAR from GADD45A mRNA. In terms of tissue distribution, expressed both in primordial germ cells (PGCs) and in neighboring somatic cells.

It localises to the nucleus. The protein localises to the cytoplasm. Its subcellular location is the stress granule. It is found in the cytolytic granule. In terms of biological role, RNA-binding protein involved in alternative pre-RNA splicing and in cytoplasmic stress granules formation. Shows a preference for uridine-rich RNAs. Activates splicing of alternative exons with weak 5' splice sites followed by a U-rich stretch on its own pre-mRNA and on TIA1 mRNA. Promotes the inclusion of TIA1 exon 5 to give rise to the long isoform (isoform a) of TIA1. Acts downstream of the stress-induced phosphorylation of EIF2S1/EIF2A to promote the recruitment of untranslated mRNAs to cytoplasmic stress granules (SG). Possesses nucleolytic activity against cytotoxic lymphocyte target cells. May be involved in apoptosis. This Mus musculus (Mouse) protein is Nucleolysin TIAR (Tial1).